Here is a 389-residue protein sequence, read N- to C-terminus: Succinate--CoA ligase [ADP-forming] subunit beta (389 aa).

The ATP-grasp domain maps to 9–244 (KELLRQFNVP…IDEEDAAEIE (236 aa)). ATP contacts are provided by residues Lys46, 53–55 (GRG), Glu99, Ala102, and Glu107. Residues Asn199 and Asp213 each coordinate Mg(2+). Substrate is bound by residues Asn264 and 321-323 (GIM).

It belongs to the succinate/malate CoA ligase beta subunit family. As to quaternary structure, heterotetramer of two alpha and two beta subunits. Mg(2+) is required as a cofactor.

It catalyses the reaction succinate + ATP + CoA = succinyl-CoA + ADP + phosphate. The enzyme catalyses GTP + succinate + CoA = succinyl-CoA + GDP + phosphate. It participates in carbohydrate metabolism; tricarboxylic acid cycle; succinate from succinyl-CoA (ligase route): step 1/1. Its function is as follows. Succinyl-CoA synthetase functions in the citric acid cycle (TCA), coupling the hydrolysis of succinyl-CoA to the synthesis of either ATP or GTP and thus represents the only step of substrate-level phosphorylation in the TCA. The beta subunit provides nucleotide specificity of the enzyme and binds the substrate succinate, while the binding sites for coenzyme A and phosphate are found in the alpha subunit. The protein is Succinate--CoA ligase [ADP-forming] subunit beta of Polynucleobacter necessarius subsp. necessarius (strain STIR1).